Reading from the N-terminus, the 208-residue chain is MTEEARRIVIEHAVEGTRLRESYFNGNADKVVDGARRMAVTLAKGHKLLFCGNGGSAADAQHLAAEFVNRFQMERPPLPAIALTTDTSIITAIGNDYSFDQIFEKQVQALGNEGDMLVGISTSGNSPNVVRAMHAARERGLATMGLTGRGGGEMAGLCDILFDVDHGRTALVQEVHITIGHLLCGLTDHFLFENVLALQPWLKDATNA.

One can recognise an SIS domain in the interval 38–200; that stretch reads MAVTLAKGHK…LFENVLALQP (163 aa). Residue 53–55 coordinates substrate; that stretch reads NGG. Zn(2+) contacts are provided by His-62 and Glu-66. Substrate-binding positions include Glu-66, 95–96, 121–123, Ser-126, and Gln-173; these read ND and STS. Gln-173 and His-181 together coordinate Zn(2+).

Belongs to the SIS family. GmhA subfamily. In terms of assembly, homotetramer. The cofactor is Zn(2+).

The protein localises to the cytoplasm. It carries out the reaction 2 D-sedoheptulose 7-phosphate = D-glycero-alpha-D-manno-heptose 7-phosphate + D-glycero-beta-D-manno-heptose 7-phosphate. It participates in carbohydrate biosynthesis; D-glycero-D-manno-heptose 7-phosphate biosynthesis; D-glycero-alpha-D-manno-heptose 7-phosphate and D-glycero-beta-D-manno-heptose 7-phosphate from sedoheptulose 7-phosphate: step 1/1. Functionally, catalyzes the isomerization of sedoheptulose 7-phosphate in D-glycero-D-manno-heptose 7-phosphate. This chain is Phosphoheptose isomerase, found in Nitratidesulfovibrio vulgaris (strain ATCC 29579 / DSM 644 / CCUG 34227 / NCIMB 8303 / VKM B-1760 / Hildenborough) (Desulfovibrio vulgaris).